The sequence spans 275 residues: 3-methyl-2-oxobutanoate hydroxymethyltransferase (275 aa).

The Mg(2+) site is built by aspartate 44 and aspartate 83. 3-methyl-2-oxobutanoate is bound by residues 44–45, aspartate 83, and lysine 113; that span reads DS. Glutamate 115 contacts Mg(2+). The active-site Proton acceptor is the glutamate 182.

Belongs to the PanB family. In terms of assembly, homodecamer; pentamer of dimers. Requires Mg(2+) as cofactor.

The protein localises to the cytoplasm. It carries out the reaction 3-methyl-2-oxobutanoate + (6R)-5,10-methylene-5,6,7,8-tetrahydrofolate + H2O = 2-dehydropantoate + (6S)-5,6,7,8-tetrahydrofolate. It functions in the pathway cofactor biosynthesis; (R)-pantothenate biosynthesis; (R)-pantoate from 3-methyl-2-oxobutanoate: step 1/2. Catalyzes the reversible reaction in which hydroxymethyl group from 5,10-methylenetetrahydrofolate is transferred onto alpha-ketoisovalerate to form ketopantoate. The sequence is that of 3-methyl-2-oxobutanoate hydroxymethyltransferase from Clostridium botulinum (strain Alaska E43 / Type E3).